The sequence spans 91 residues: Acylphosphatase (91 aa).

An Acylphosphatase-like domain is found at 5-91 (RLTAWVRGHV…RGSFTGFEER (87 aa)). Active-site residues include Arg20 and Asn38.

It belongs to the acylphosphatase family.

It carries out the reaction an acyl phosphate + H2O = a carboxylate + phosphate + H(+). In Thermobifida fusca (strain YX), this protein is Acylphosphatase (acyP).